We begin with the raw amino-acid sequence, 206 residues long: Adenylate kinase (206 aa).

Position 10-15 (Gly10–Thr15) interacts with ATP. An NMP region spans residues Ser30–Val59. AMP-binding positions include Thr31, Arg36, Gly57–Val59, Gly85–Arg88, and Gln92. Residues Asn126–Asp142 are LID. Position 127 (Arg127) interacts with ATP. 2 residues coordinate AMP: Arg139 and Arg150. Met178 lines the ATP pocket.

Belongs to the adenylate kinase family. In terms of assembly, monomer.

It is found in the cytoplasm. The enzyme catalyses AMP + ATP = 2 ADP. Its pathway is purine metabolism; AMP biosynthesis via salvage pathway; AMP from ADP: step 1/1. Functionally, catalyzes the reversible transfer of the terminal phosphate group between ATP and AMP. Plays an important role in cellular energy homeostasis and in adenine nucleotide metabolism. This chain is Adenylate kinase, found in Nitrobacter winogradskyi (strain ATCC 25391 / DSM 10237 / CIP 104748 / NCIMB 11846 / Nb-255).